Reading from the N-terminus, the 452-residue chain is Cobyrinate a,c-diamide synthase (452 aa).

Residues 246–439 (TLAYALDDAF…LHVHFYQDEQ (194 aa)) enclose the GATase cobBQ-type domain. Catalysis depends on C328, which acts as the Nucleophile.

Belongs to the CobB/CbiA family. The cofactor is Mg(2+).

It carries out the reaction cob(II)yrinate + 2 L-glutamine + 2 ATP + 2 H2O = cob(II)yrinate a,c diamide + 2 L-glutamate + 2 ADP + 2 phosphate + 2 H(+). It functions in the pathway cofactor biosynthesis; adenosylcobalamin biosynthesis; cob(II)yrinate a,c-diamide from sirohydrochlorin (anaerobic route): step 10/10. Functionally, catalyzes the ATP-dependent amidation of the two carboxylate groups at positions a and c of cobyrinate, using either L-glutamine or ammonia as the nitrogen source. The sequence is that of Cobyrinate a,c-diamide synthase from Streptococcus sanguinis (strain SK36).